A 635-amino-acid chain; its full sequence is tRNA 5-methylaminomethyl-2-thiouridine biosynthesis bifunctional protein MnmC (635 aa).

Residues 1-231 (MPITPASLSF…KRQMLRGRYL (231 aa)) are tRNA (mnm(5)s(2)U34)-methyltransferase. The interval 249-635 (IGAGVAGTSI…RPARTLRGED (387 aa)) is FAD-dependent cmnm(5)s(2)U34 oxidoreductase.

It in the N-terminal section; belongs to the methyltransferase superfamily. tRNA (mnm(5)s(2)U34)-methyltransferase family. The protein in the C-terminal section; belongs to the DAO family. FAD is required as a cofactor.

It localises to the cytoplasm. It catalyses the reaction 5-aminomethyl-2-thiouridine(34) in tRNA + S-adenosyl-L-methionine = 5-methylaminomethyl-2-thiouridine(34) in tRNA + S-adenosyl-L-homocysteine + H(+). Functionally, catalyzes the last two steps in the biosynthesis of 5-methylaminomethyl-2-thiouridine (mnm(5)s(2)U) at the wobble position (U34) in tRNA. Catalyzes the FAD-dependent demodification of cmnm(5)s(2)U34 to nm(5)s(2)U34, followed by the transfer of a methyl group from S-adenosyl-L-methionine to nm(5)s(2)U34, to form mnm(5)s(2)U34. The sequence is that of tRNA 5-methylaminomethyl-2-thiouridine biosynthesis bifunctional protein MnmC from Azoarcus sp. (strain BH72).